Reading from the N-terminus, the 258-residue chain is F-box/LRR-repeat protein 25 (258 aa).

The F-box domain occupies 27–76 (SDSISNLPDEILHHILSFIPETNLVIRTSVLSKRWRHVWSKTPHLSFEWL). 4 LRR repeats span residues 101–130 (CTSY…SLAF), 136–161 (CNKF…SLTP), 177–202 (RCNL…SLKF), and 224–249 (RRSC…RLRD).

The sequence is that of F-box/LRR-repeat protein 25 (FBL25) from Arabidopsis thaliana (Mouse-ear cress).